Consider the following 565-residue polypeptide: Dihydroxy-acid dehydratase (565 aa).

Cys50 is a binding site for [2Fe-2S] cluster. Residue Asp82 participates in Mg(2+) binding. Cys123 is a binding site for [2Fe-2S] cluster. Residues Asp124 and Lys125 each coordinate Mg(2+). Lys125 carries the N6-carboxylysine modification. Residue Cys195 participates in [2Fe-2S] cluster binding. Glu447 contacts Mg(2+). The active-site Proton acceptor is Ser473.

Belongs to the IlvD/Edd family. As to quaternary structure, homodimer. [2Fe-2S] cluster serves as cofactor. Requires Mg(2+) as cofactor.

It catalyses the reaction (2R)-2,3-dihydroxy-3-methylbutanoate = 3-methyl-2-oxobutanoate + H2O. The catalysed reaction is (2R,3R)-2,3-dihydroxy-3-methylpentanoate = (S)-3-methyl-2-oxopentanoate + H2O. It participates in amino-acid biosynthesis; L-isoleucine biosynthesis; L-isoleucine from 2-oxobutanoate: step 3/4. Its pathway is amino-acid biosynthesis; L-valine biosynthesis; L-valine from pyruvate: step 3/4. Its function is as follows. Functions in the biosynthesis of branched-chain amino acids. Catalyzes the dehydration of (2R,3R)-2,3-dihydroxy-3-methylpentanoate (2,3-dihydroxy-3-methylvalerate) into 2-oxo-3-methylpentanoate (2-oxo-3-methylvalerate) and of (2R)-2,3-dihydroxy-3-methylbutanoate (2,3-dihydroxyisovalerate) into 2-oxo-3-methylbutanoate (2-oxoisovalerate), the penultimate precursor to L-isoleucine and L-valine, respectively. This is Dihydroxy-acid dehydratase from Halorhodospira halophila (strain DSM 244 / SL1) (Ectothiorhodospira halophila (strain DSM 244 / SL1)).